Consider the following 98-residue polypeptide: Large ribosomal subunit protein uL23 (98 aa).

This sequence belongs to the universal ribosomal protein uL23 family. In terms of assembly, part of the 50S ribosomal subunit. Contacts protein L29, and trigger factor when it is bound to the ribosome.

Its function is as follows. One of the early assembly proteins it binds 23S rRNA. One of the proteins that surrounds the polypeptide exit tunnel on the outside of the ribosome. Forms the main docking site for trigger factor binding to the ribosome. This chain is Large ribosomal subunit protein uL23, found in Rickettsia peacockii (strain Rustic).